A 24-amino-acid chain; its full sequence is Small ribosomal subunit protein uS19c (24 aa).

This sequence belongs to the universal ribosomal protein uS19 family.

The protein localises to the plastid. It localises to the chloroplast. In terms of biological role, protein S19 forms a complex with S13 that binds strongly to the 16S ribosomal RNA. The polypeptide is Small ribosomal subunit protein uS19c (rps19) (Petunia hybrida (Petunia)).